The primary structure comprises 858 residues: Leucine--tRNA ligase (858 aa).

A 'HIGH' region motif is present at residues 42-52; sequence PYPSGRLHMGH. The short motif at 618–622 is the 'KMSKS' region element; it reads KMSKS. An ATP-binding site is contributed by Lys621.

The protein belongs to the class-I aminoacyl-tRNA synthetase family.

Its subcellular location is the cytoplasm. It carries out the reaction tRNA(Leu) + L-leucine + ATP = L-leucyl-tRNA(Leu) + AMP + diphosphate. This Aliivibrio salmonicida (strain LFI1238) (Vibrio salmonicida (strain LFI1238)) protein is Leucine--tRNA ligase.